A 158-amino-acid chain; its full sequence is Dihydroneopterin triphosphate diphosphatase (158 aa).

Positions 14, 36, and 47 each coordinate substrate. In terms of domain architecture, Nudix hydrolase spans 14–153; sequence KNNQSVLVVI…NNAEAIKKYL (140 aa). A Nudix box motif is present at residues 48-69; the sequence is GTIESDETPKKTAIRELWEEVR. Residues Glu-63 and Glu-67 each coordinate Mg(2+). 88-91 contacts substrate; sequence FEIF. Mg(2+) is bound at residue Glu-124. Position 142 (Ser-142) interacts with substrate.

This sequence belongs to the Nudix hydrolase family. Mg(2+) serves as cofactor.

It carries out the reaction 7,8-dihydroneopterin 3'-triphosphate + H2O = 7,8-dihydroneopterin 3'-phosphate + diphosphate + H(+). Its function is as follows. Catalyzes the hydrolysis of dihydroneopterin triphosphate to dihydroneopterin monophosphate and pyrophosphate. Required for efficient folate biosynthesis. Can also hydrolyze nucleoside triphosphates with a preference for dATP. This chain is Dihydroneopterin triphosphate diphosphatase (nudB), found in Haemophilus influenzae (strain ATCC 51907 / DSM 11121 / KW20 / Rd).